Reading from the N-terminus, the 132-residue chain is Large-conductance mechanosensitive channel (132 aa).

A run of 2 helical transmembrane segments spans residues 11–31 and 75–95; these read FISR…GAFG and GSFL…FLLV.

This sequence belongs to the MscL family. In terms of assembly, homopentamer.

It localises to the cell inner membrane. Functionally, channel that opens in response to stretch forces in the membrane lipid bilayer. May participate in the regulation of osmotic pressure changes within the cell. This chain is Large-conductance mechanosensitive channel, found in Synechococcus sp. (strain JA-3-3Ab) (Cyanobacteria bacterium Yellowstone A-Prime).